The following is a 201-amino-acid chain: Recombination protein RecR (201 aa).

The C4-type zinc finger occupies 57 to 72; it reads CECCRTLTEEPLCRIC. A Toprim domain is found at 81–176; the sequence is GVLCIVETPA…NTTRIAHGVP (96 aa).

It belongs to the RecR family.

In terms of biological role, may play a role in DNA repair. It seems to be involved in an RecBC-independent recombinational process of DNA repair. It may act with RecF and RecO. The protein is Recombination protein RecR of Idiomarina loihiensis (strain ATCC BAA-735 / DSM 15497 / L2-TR).